The following is a 363-amino-acid chain: 3-isopropylmalate dehydrogenase (363 aa).

78-91 (XXXXXXXXXXXXXX) provides a ligand contact to NAD(+). Substrate contacts are provided by Arg99, Arg109, Arg138, and Asp227. Mg(2+) contacts are provided by Asp227, Asp251, and Asp255. NAD(+) is bound at residue 285–297 (GSAPDIEGKNIAN).

Belongs to the isocitrate and isopropylmalate dehydrogenases family. LeuB type 1 subfamily. In terms of assembly, homodimer. The cofactor is Mg(2+). Mn(2+) serves as cofactor.

The protein resides in the cytoplasm. The catalysed reaction is (2R,3S)-3-isopropylmalate + NAD(+) = 4-methyl-2-oxopentanoate + CO2 + NADH. The protein operates within amino-acid biosynthesis; L-leucine biosynthesis; L-leucine from 3-methyl-2-oxobutanoate: step 3/4. Catalyzes the oxidation of 3-carboxy-2-hydroxy-4-methylpentanoate (3-isopropylmalate) to 3-carboxy-4-methyl-2-oxopentanoate. The product decarboxylates to 4-methyl-2 oxopentanoate. The polypeptide is 3-isopropylmalate dehydrogenase (Buchnera aphidicola subsp. Uroleucon solidaginis).